A 163-amino-acid chain; its full sequence is UPF0262 protein RPA4530 (163 aa).

The protein belongs to the UPF0262 family.

In Rhodopseudomonas palustris (strain ATCC BAA-98 / CGA009), this protein is UPF0262 protein RPA4530.